We begin with the raw amino-acid sequence, 823 residues long: Pentatricopeptide repeat-containing protein At4g33990 (823 aa).

PPR repeat units lie at residues 85 to 115 (NVCI…IQNR), 116 to 151 (DVYA…GLTP), 152 to 183 (DYRT…GFMW), 184 to 214 (DVYV…MPVR), 215 to 249 (DMGS…DSVT), 252 to 280 (SLLS…GLES), 281 to 311 (ELFV…MYVR), 312 to 346 (DLIS…RIQP), 347 to 381 (DCLT…GWFL), 383 to 413 (DITI…LPNT), 414 to 448 (DVIS…GEIA), 450 to 484 (NQGT…GLYL), 485 to 515 (DVFV…IPRV), 516 to 550 (NSVP…GVKP), 551 to 581 (DHIT…MQTD), and 587 to 617 (SLKH…MSLQ). The type E motif stretch occupies residues 622-697 (IWGALLSACR…TPGWSSMEVD (76 aa)). The segment at 698–728 (NKVEVFYTGNQTHPMYEEMYRELTALQAKLK) is type E(+) motif. The segment at 729–823 (MIGYVPDHRF…NGVCSCGDYW (95 aa)) is type DYW motif.

Belongs to the PPR family. PCMP-H subfamily.

This Arabidopsis thaliana (Mouse-ear cress) protein is Pentatricopeptide repeat-containing protein At4g33990 (EMB2758).